Reading from the N-terminus, the 436-residue chain is 3-ketoacyl-CoA thiolase (436 aa).

Residue C99 is the Acyl-thioester intermediate of the active site. Residues H392 and C422 each act as proton acceptor in the active site.

This sequence belongs to the thiolase-like superfamily. Thiolase family. In terms of assembly, heterotetramer of two alpha chains (FadJ) and two beta chains (FadI).

It is found in the cytoplasm. The catalysed reaction is an acyl-CoA + acetyl-CoA = a 3-oxoacyl-CoA + CoA. The protein operates within lipid metabolism; fatty acid beta-oxidation. Functionally, catalyzes the final step of fatty acid oxidation in which acetyl-CoA is released and the CoA ester of a fatty acid two carbons shorter is formed. The polypeptide is 3-ketoacyl-CoA thiolase (Salmonella newport (strain SL254)).